Reading from the N-terminus, the 183-residue chain is Helofensin-2 (183 aa).

Positions 1–26 (MQMDWLFIAVISGIGLLSSGVPGTQG) are cleaved as a signal peptide. The stretch at 27 to 64 (AYTTEQCRALNGSCNFYACFPKNVIIGKCDWWGWSCCA) is one C(6)C(4)C(9)C(6)CC 1; approximate repeat. The C(6)C(4)C(9)C(6)CC 2; approximate repeat unit spans residues 65–101 (RTPLERCTAKKGTCTKTGCTKTDTDHGPCDGGAQCCQ). One copy of the C(6)C(4)C(9)C(6)CC 3; approximate repeat lies at 102–139 (RDPVKYCKFHGNVCGRGKCPMDHIPIGEQCMPGYPCCK). The stretch at 140 to 177 (RDGPAYCKSKGGKCLRRCSQIVPTDIIGVCADGVPCCK) is one C(6)C(4)C(9)C(6)CC 4; approximate repeat.

Belongs to the beta-defensin family. Helofensin subfamily. In terms of tissue distribution, expressed by the mandibular venom gland.

It is found in the secreted. Its function is as follows. Lethal toxin which possesses an inhibitory effect on direct electrical stimulation of the isolated hemi-diaphragm of mice. Neither hemorrhagic nor hemolytic activities are detected. Phospholipase A2 activity, proteolytic activity and arginine esterolytic activity are absent. This Heloderma suspectum cinctum (Banded Gila monster) protein is Helofensin-2.